The sequence spans 103 residues: Large ribosomal subunit protein bL21 (103 aa).

It belongs to the bacterial ribosomal protein bL21 family. Part of the 50S ribosomal subunit. Contacts protein L20.

In terms of biological role, this protein binds to 23S rRNA in the presence of protein L20. The chain is Large ribosomal subunit protein bL21 from Dechloromonas aromatica (strain RCB).